Consider the following 217-residue polypeptide: Pyrophosphatase PpaX (217 aa).

Aspartate 11 serves as the catalytic Nucleophile.

Belongs to the HAD-like hydrolase superfamily. PpaX family. Mg(2+) serves as cofactor.

The catalysed reaction is diphosphate + H2O = 2 phosphate + H(+). In terms of biological role, hydrolyzes pyrophosphate formed during P-Ser-HPr dephosphorylation by HPrK/P. Might play a role in controlling the intracellular pyrophosphate pool. This is Pyrophosphatase PpaX from Listeria monocytogenes serotype 4a (strain HCC23).